A 142-amino-acid chain; its full sequence is Protein CPn_0742/CP_0003/CPj0742/CpB0770 (142 aa).

Residues 115–142 are disordered; that stretch reads LHPTKESKRPKQKLSSTKKNKKKNWIPL. A compositionally biased stretch (basic residues) spans 124–142; sequence PKQKLSSTKKNKKKNWIPL.

Belongs to the chlamydial CPn_0742/CT_635/TC_0003 family.

The sequence is that of Protein CPn_0742/CP_0003/CPj0742/CpB0770 from Chlamydia pneumoniae (Chlamydophila pneumoniae).